Consider the following 212-residue polypeptide: Redox-sensing transcriptional repressor Rex (212 aa).

The H-T-H motif DNA-binding region spans 16-55; that stretch reads IYYRYLNILLDADKTRVSSTELSEAVKVDSATIRRDFSYF. 90–95 contacts NAD(+); it reads GVGNLG.

This sequence belongs to the transcriptional regulatory Rex family. As to quaternary structure, homodimer.

It localises to the cytoplasm. Modulates transcription in response to changes in cellular NADH/NAD(+) redox state. The sequence is that of Redox-sensing transcriptional repressor Rex from Levilactobacillus brevis (strain ATCC 367 / BCRC 12310 / CIP 105137 / JCM 1170 / LMG 11437 / NCIMB 947 / NCTC 947) (Lactobacillus brevis).